Consider the following 100-residue polypeptide: Protein MEN-8 (100 aa).

Residues 1–33 form the signal peptide; that stretch reads MANNMKSATFCKATWAIFLVALAILVQLKGSEA. 4 cysteine pairs are disulfide-bonded: C38–C76, C48–C65, C66–C91, and C78–C98.

It belongs to the A9/FIL1 family.

It is found in the secreted. This is Protein MEN-8 (MEN-8) from Silene latifolia (White campion).